The sequence spans 368 residues: DNA replication and repair protein RecF (368 aa).

30-37 (GDNGAGKT) provides a ligand contact to ATP.

It belongs to the RecF family.

It localises to the cytoplasm. The RecF protein is involved in DNA metabolism; it is required for DNA replication and normal SOS inducibility. RecF binds preferentially to single-stranded, linear DNA. It also seems to bind ATP. The polypeptide is DNA replication and repair protein RecF (Xanthomonas axonopodis pv. citri (strain 306)).